Consider the following 359-residue polypeptide: Diacyltrehalose acyltransferase Chp2 (359 aa).

Residues 4–24 (VIAGAFAVWLVGWAGGFGTAI) form a helical membrane-spanning segment. In terms of domain architecture, PE-PPE spans 79 to 316 (PNAKHDLIDY…VLQPQIDAAY (238 aa)).

The protein belongs to the mycobacterial PPE family.

The protein localises to the cell inner membrane. Activity is probably potentiated by the DAT/PAT transporter MmpL10. Inhibited by the lipase inhibitor tetrahydrolipstatin (THL). Involved in the final steps of polyacyltrehalose (PAT) biosynthesis. Catalyzes the transfer of three mycolipenoyl groups onto diacyltrehalose (DAT) to form PAT. The polypeptide is Diacyltrehalose acyltransferase Chp2 (Mycobacterium tuberculosis (strain ATCC 25618 / H37Rv)).